Here is a 559-residue protein sequence, read N- to C-terminus: Formate--tetrahydrofolate ligase (559 aa).

68–75 (TPAGEGKS) is an ATP binding site.

It belongs to the formate--tetrahydrofolate ligase family.

It carries out the reaction (6S)-5,6,7,8-tetrahydrofolate + formate + ATP = (6R)-10-formyltetrahydrofolate + ADP + phosphate. It functions in the pathway one-carbon metabolism; tetrahydrofolate interconversion. The protein is Formate--tetrahydrofolate ligase of Lactobacillus gasseri (strain ATCC 33323 / DSM 20243 / BCRC 14619 / CIP 102991 / JCM 1131 / KCTC 3163 / NCIMB 11718 / NCTC 13722 / AM63).